The primary structure comprises 275 residues: Pyridoxal phosphate homeostasis protein (275 aa).

Position 6 is a phosphoserine (serine 6). Lysine 47 is subject to N6-(pyridoxal phosphate)lysine. Tyrosine 69 is modified (phosphotyrosine). The residue at position 125 (lysine 125) is an N6-succinyllysine. Phosphoserine is present on residues serine 226 and serine 244.

Belongs to the pyridoxal phosphate-binding protein YggS/PROSC family.

Functionally, pyridoxal 5'-phosphate (PLP)-binding protein, which may be involved in intracellular homeostatic regulation of pyridoxal 5'-phosphate (PLP), the active form of vitamin B6. The polypeptide is Pyridoxal phosphate homeostasis protein (Pongo abelii (Sumatran orangutan)).